We begin with the raw amino-acid sequence, 119 residues long: Large ribosomal subunit protein uL18 (119 aa).

The segment at 1–23 is disordered; it reads MSQVDKAARRQKIKDRSRVSVQG.

Belongs to the universal ribosomal protein uL18 family. In terms of assembly, part of the 50S ribosomal subunit; part of the 5S rRNA/L5/L18/L25 subcomplex. Contacts the 5S and 23S rRNAs.

This is one of the proteins that bind and probably mediate the attachment of the 5S RNA into the large ribosomal subunit, where it forms part of the central protuberance. The polypeptide is Large ribosomal subunit protein uL18 (Chlorobium chlorochromatii (strain CaD3)).